Here is a 73-residue protein sequence, read N- to C-terminus: Disintegrin lachesin (73 aa).

Residues 1-73 enclose the Disintegrin domain; sequence EAGEECDCGA…ADCPRNGYYG (73 aa). Intrachain disulfides connect C6–C21, C8–C16, C15–C38, C29–C35, C34–C59, and C47–C66. A Cell attachment site motif is present at residues 51–53; the sequence is RGD. Residues 51 to 73 are disordered; the sequence is RGDNPDDRCTGQSADCPRNGYYG.

This sequence belongs to the venom metalloproteinase (M12B) family. P-II subfamily. P-IIa sub-subfamily. In terms of assembly, monomer (disintegrin). Expressed by the venom gland.

The protein resides in the secreted. Its function is as follows. Inhibits fibrinogen interaction with platelets. Acts by binding to alpha-IIb/beta-3 (ITGA2B/ITGB3) on the platelet surface and inhibits aggregation induced by ADP, thrombin, platelet-activating factor and collagen. The polypeptide is Disintegrin lachesin (Lachesis muta muta (Bushmaster)).